The chain runs to 581 residues: Proline--tRNA ligase 1 (581 aa).

It belongs to the class-II aminoacyl-tRNA synthetase family. ProS type 1 subfamily. In terms of assembly, homodimer.

Its subcellular location is the cytoplasm. It carries out the reaction tRNA(Pro) + L-proline + ATP = L-prolyl-tRNA(Pro) + AMP + diphosphate. Functionally, catalyzes the attachment of proline to tRNA(Pro) in a two-step reaction: proline is first activated by ATP to form Pro-AMP and then transferred to the acceptor end of tRNA(Pro). As ProRS can inadvertently accommodate and process non-cognate amino acids such as alanine and cysteine, to avoid such errors it has two additional distinct editing activities against alanine. One activity is designated as 'pretransfer' editing and involves the tRNA(Pro)-independent hydrolysis of activated Ala-AMP. The other activity is designated 'posttransfer' editing and involves deacylation of mischarged Ala-tRNA(Pro). The misacylated Cys-tRNA(Pro) is not edited by ProRS. This is Proline--tRNA ligase 1 from Rhodococcus jostii (strain RHA1).